The sequence spans 448 residues: Glucose-6-phosphate isomerase (448 aa).

E290 acts as the Proton donor in catalysis. Active-site residues include H311 and K425.

Belongs to the GPI family.

It localises to the cytoplasm. The enzyme catalyses alpha-D-glucose 6-phosphate = beta-D-fructose 6-phosphate. Its pathway is carbohydrate biosynthesis; gluconeogenesis. It participates in carbohydrate degradation; glycolysis; D-glyceraldehyde 3-phosphate and glycerone phosphate from D-glucose: step 2/4. Catalyzes the reversible isomerization of glucose-6-phosphate to fructose-6-phosphate. This chain is Glucose-6-phosphate isomerase, found in Oceanobacillus iheyensis (strain DSM 14371 / CIP 107618 / JCM 11309 / KCTC 3954 / HTE831).